The chain runs to 215 residues: Pyrrolidone-carboxylate peptidase (215 aa).

Residues glutamate 80, cysteine 143, and histidine 167 contribute to the active site.

The protein belongs to the peptidase C15 family. Homotetramer.

The protein localises to the cytoplasm. It carries out the reaction Release of an N-terminal pyroglutamyl group from a polypeptide, the second amino acid generally not being Pro.. Functionally, removes 5-oxoproline from various penultimate amino acid residues except L-proline. This Brevibacillus brevis (strain 47 / JCM 6285 / NBRC 100599) protein is Pyrrolidone-carboxylate peptidase.